The primary structure comprises 210 residues: Scoloptoxin SSD552 (210 aa).

A signal peptide spans 1 to 23 (MNILLSSTLFVLLMFQIIGSGMG).

In terms of processing, contains 3 disulfide bonds. As to expression, expressed by the venom gland.

Its subcellular location is the secreted. This chain is Scoloptoxin SSD552, found in Scolopendra dehaani (Thai centipede).